The chain runs to 481 residues: Two-component response regulator ORR32 (481 aa).

The Response regulatory domain occupies 13 to 138 (HVMLVDDDTK…TIALWRVVAW (126 aa)). D66 bears the 4-aspartylphosphate mark.

Belongs to the ARR family. Type-B subfamily. Two-component system major event consists of a His-to-Asp phosphorelay between a sensor histidine kinase (HK) and a response regulator (RR). In plants, the His-to-Asp phosphorelay involves an additional intermediate named Histidine-containing phosphotransfer protein (HPt). This multistep phosphorelay consists of a His-Asp-His-Asp sequential transfer of a phosphate group between first a His and an Asp of the HK protein, followed by the transfer to a conserved His of the HPt protein and finally the transfer to an Asp in the receiver domain of the RR protein.

Its function is as follows. Functions as a response regulator involved in His-to-Asp phosphorelay signal transduction system. Phosphorylation of the Asp residue in the receiver domain activates the ability of the protein to promote the transcription of target genes. May directly activate some type-A response regulators in response to cytokinins. This is Two-component response regulator ORR32 from Oryza sativa subsp. japonica (Rice).